Reading from the N-terminus, the 65-residue chain is Large ribosomal subunit protein bL32 (65 aa).

The protein belongs to the bacterial ribosomal protein bL32 family.

The sequence is that of Large ribosomal subunit protein bL32 from Metamycoplasma arthritidis (strain 158L3-1) (Mycoplasma arthritidis).